The sequence spans 603 residues: DNA mismatch repair protein MutL (603 aa).

It belongs to the DNA mismatch repair MutL/HexB family.

Its function is as follows. This protein is involved in the repair of mismatches in DNA. It is required for dam-dependent methyl-directed DNA mismatch repair. May act as a 'molecular matchmaker', a protein that promotes the formation of a stable complex between two or more DNA-binding proteins in an ATP-dependent manner without itself being part of a final effector complex. The protein is DNA mismatch repair protein MutL of Listeria monocytogenes serotype 4a (strain HCC23).